A 781-amino-acid chain; its full sequence is Poly(ADP-ribose) glycohydrolase 1 (781 aa).

Disordered stretches follow at residues 28–87 (AHQV…VSEN), 102–131 (SLDN…NNKS), and 206–232 (ADST…DADS). Residues 106-121 (VTERSEHTLDNHKSTE) show a composition bias toward basic and acidic residues.

It belongs to the poly(ADP-ribose) glycohydrolase family. In terms of tissue distribution, expressed in head and tail neurons. Also detected in the central nerve cord and motor neurons.

Its subcellular location is the nucleus. The enzyme catalyses [(1''-&gt;2')-ADP-alpha-D-ribose](n) + H2O = [(1''-&gt;2')-ADP-alpha-D-ribose](n-1) + ADP-D-ribose. Poly(ADP-ribose) synthesized after DNA damage is only present transiently and is rapidly degraded by poly(ADP-ribose) glycohydrolase. Poly(ADP-ribose) metabolism may be required for maintenance of the normal function of neuronal cells. The chain is Poly(ADP-ribose) glycohydrolase 1 from Caenorhabditis elegans.